A 149-amino-acid chain; its full sequence is Calmodulin (149 aa).

The residue at position 2 (Ala-2) is an N-acetylalanine. 4 EF-hand domains span residues 8–43, 44–79, 81–116, and 117–149; these read EQIA…LGQN, PTEA…KMKE, DSEE…LGEK, and LTDD…MVSK. Position 14 is an N6,N6-dimethyllysine (Lys-14). Ca(2+) contacts are provided by Asp-21, Asp-23, Asp-25, Thr-27, Glu-32, Asp-57, Asp-59, Asn-61, Thr-63, Glu-68, Asp-94, Asp-96, Asn-98, and Glu-105. Position 116 is an N6,N6,N6-trimethyllysine (Lys-116). Residues Asp-130, Asp-132, Asp-134, His-136, and Glu-141 each coordinate Ca(2+).

This sequence belongs to the calmodulin family. Post-translationally, the pantophobiac mutant CAM2 is undermethylated on Lys-116.

Calmodulin mediates the control of a large number of enzymes, ion channels and other proteins by Ca(2+). Among the enzymes to be stimulated by the calmodulin-Ca(2+) complex are a number of protein kinases and phosphatases. The chain is Calmodulin (CAM) from Paramecium tetraurelia.